We begin with the raw amino-acid sequence, 240 residues long: Uridylate kinase (240 aa).

13 to 16 serves as a coordination point for ATP; it reads KLSG. The segment at 21 to 26 is involved in allosteric activation by GTP; the sequence is GEQGYG. Gly-55 contributes to the UMP binding site. The ATP site is built by Gly-56 and Arg-60. UMP is bound by residues Asp-75 and 137 to 144; that span reads TGNPFFST. Thr-164, Tyr-170, and Asp-173 together coordinate ATP.

This sequence belongs to the UMP kinase family. As to quaternary structure, homohexamer.

The protein resides in the cytoplasm. It carries out the reaction UMP + ATP = UDP + ADP. It functions in the pathway pyrimidine metabolism; CTP biosynthesis via de novo pathway; UDP from UMP (UMPK route): step 1/1. Allosterically activated by GTP. Inhibited by UTP. Catalyzes the reversible phosphorylation of UMP to UDP. The protein is Uridylate kinase of Aquifex aeolicus (strain VF5).